Reading from the N-terminus, the 520-residue chain is Autophagy-related protein 22 (520 aa).

The N-linked (GlcNAc...) asparagine glycan is linked to Asn-11. The next 4 helical transmembrane spans lie at Ile-32 to Thr-52, Phe-104 to Ile-124, Asn-133 to Tyr-153, and Tyr-158 to Gly-178. Asn-193 is a glycosylation site (N-linked (GlcNAc...) asparagine). The next 2 membrane-spanning stretches (helical) occupy residues Gly-214–Lys-234 and Val-244–Leu-264. Asn-280 is a glycosylation site (N-linked (GlcNAc...) asparagine). 6 helical membrane passes run Val-316–Thr-336, Leu-350–Ile-370, Leu-386–Phe-406, Phe-415–Ser-435, Ile-454–Thr-474, and Ser-483–Val-503.

This sequence belongs to the ATG22 family.

The protein localises to the vacuole membrane. Its function is as follows. Vacuolar effluxer which mediate the efflux of amino acids resulting from autophagic degradation. The release of autophagic amino acids allows the maintenance of protein synthesis and viability during nitrogen starvation. This chain is Autophagy-related protein 22 (ATG22), found in Vanderwaltozyma polyspora (strain ATCC 22028 / DSM 70294 / BCRC 21397 / CBS 2163 / NBRC 10782 / NRRL Y-8283 / UCD 57-17) (Kluyveromyces polysporus).